The following is a 57-amino-acid chain: MSTKDFNLDLVSVSKKDSGASPRITSISLCTPGCKTGALMGCNMKTATCNCSIHVSK.

A propeptide spanning residues 1–23 is cleaved from the precursor; sequence MSTKDFNLDLVSVSKKDSGASPR. Thr-25 bears the 2,3-didehydrobutyrine mark. Residues 26–30 constitute a cross-link (lanthionine (Ser-Cys)); that stretch reads SISLC. Ser-28 is modified (2,3-didehydroalanine (Ser)). 4 consecutive cross-links (beta-methyllanthionine (Thr-Cys)) follow at residues 31–34, 36–42, 46–49, and 48–51; these read TPGC, TGALMGC, TATC, and TCNC. Ser-56 is subject to 2,3-didehydroalanine (Ser).

The protein belongs to the type A lantibiotic family. Post-translationally, maturation of lantibiotics involves the enzymatic conversion of Thr, and Ser into dehydrated AA and the formation of thioether bonds with cysteine. This is followed by membrane translocation and cleavage of the modified precursor. In terms of processing, the structure of the 2,3-didehydrobutyrine is not discussed in PubMed:15361862. It is probably the Z-isomer by similarity.

Its function is as follows. Lanthionine-containing peptide antibiotic (lantibiotic) active on Gram-positive bacteria. The bactericidal activity of lantibiotics is based on depolarization of energized bacterial cytoplasmic membranes, initiated by the formation of aqueous transmembrane pores. The polypeptide is Lantibiotic nisin-Z (nisZ) (Lactococcus lactis subsp. lactis (Streptococcus lactis)).